Here is a 261-residue protein sequence, read N- to C-terminus: Small ribosomal subunit protein eS1z (261 aa).

The segment covering 1–18 (MAVGKNKRISKGKKGGKK) has biased composition (basic residues). The disordered stretch occupies residues 1–20 (MAVGKNKRISKGKKGGKKKA).

This sequence belongs to the eukaryotic ribosomal protein eS1 family. As to quaternary structure, component of the small ribosomal subunit. Mature ribosomes consist of a small (40S) and a large (60S) subunit. The 40S subunit contains about 33 different proteins and 1 molecule of RNA (18S). The 60S subunit contains about 49 different proteins and 3 molecules of RNA (25S, 5.8S and 5S).

The protein localises to the cytoplasm. The polypeptide is Small ribosomal subunit protein eS1z (Vitis vinifera (Grape)).